The primary structure comprises 398 residues: Aspartate aminotransferase (398 aa).

Residues Gly-36, Trp-132, and Asn-185 each contribute to the L-aspartate site. Lys-248 bears the N6-(pyridoxal phosphate)lysine mark. Arg-376 is an L-aspartate binding site.

It belongs to the class-I pyridoxal-phosphate-dependent aminotransferase family. As to quaternary structure, homodimer. Pyridoxal 5'-phosphate serves as cofactor.

It localises to the cytoplasm. The catalysed reaction is L-aspartate + 2-oxoglutarate = oxaloacetate + L-glutamate. The polypeptide is Aspartate aminotransferase (aspC) (Pseudomonas aeruginosa (strain ATCC 15692 / DSM 22644 / CIP 104116 / JCM 14847 / LMG 12228 / 1C / PRS 101 / PAO1)).